Consider the following 251-residue polypeptide: UDP-N-acetylglucosamine--dolichyl-phosphate N-acetylglucosaminyltransferase (251 aa).

Residues 150–167 (VGNLGLSFITFLLGGYYV) traverse the membrane as a helical segment.

Belongs to the glycosyltransferase 2 family.

The protein localises to the cell membrane. It carries out the reaction a di-trans,poly-cis-dolichyl phosphate + UDP-N-acetyl-alpha-D-glucosamine = an N-acetyl-alpha-D-glucosaminyl-phospho-di-trans,poly-cis-dolichol + UDP. It participates in cell surface structure biogenesis; S-layer biogenesis. It functions in the pathway protein modification; protein glycosylation. In terms of biological role, involved in the assembly of an N-linked disaccharide that decorates the S-layer glycoprotein and flagellins. AglK initiates N-linked glycosylation through the formation of alpha-linked dolichyl monophosphate N-acetylglucosamine. It catalyzes the transfer of GlcNAc from the donor substrate UDP-GlcNAc to dolichyl phosphate C55 (Dol-P) to yield Dol-P-GlcNAc. AglK reaction proceeds with retention of stereochemistry. The reaction is specific for UDP-GlcNAc. AglK shows a stronger preference for short dolichol (C55-60 Dol-P) substrates compared with the longer (C85-105 Dol-P). This Methanococcus voltae protein is UDP-N-acetylglucosamine--dolichyl-phosphate N-acetylglucosaminyltransferase.